The following is a 514-amino-acid chain: CENP-B homolog protein 2 (514 aa).

The HTH CENPB-type domain maps to 70 to 145 (QIRRNRQGKY…KKRCLKHGLK (76 aa)). One can recognise a DDE-1 domain in the interval 172–384 (FDPKDIFNMD…FEPSIIYNCF (213 aa)).

It localises to the nucleus. Its subcellular location is the chromosome. The protein resides in the centromere. Functionally, binds to the central core and core-associated repeat regions of centromeric heterochromatin. The polypeptide is CENP-B homolog protein 2 (cbh2) (Schizosaccharomyces pombe (strain 972 / ATCC 24843) (Fission yeast)).